The chain runs to 235 residues: Ribonuclease HII (235 aa).

An RNase H type-2 domain is found at 23 to 212; it reads GLVAGVDEAG…VAHVVSIARM (190 aa). Residues D29, E30, and D121 each coordinate a divalent metal cation.

Belongs to the RNase HII family. The cofactor is Mn(2+). Mg(2+) serves as cofactor.

The protein localises to the cytoplasm. It carries out the reaction Endonucleolytic cleavage to 5'-phosphomonoester.. In terms of biological role, endonuclease that specifically degrades the RNA of RNA-DNA hybrids. This chain is Ribonuclease HII, found in Delftia acidovorans (strain DSM 14801 / SPH-1).